We begin with the raw amino-acid sequence, 170 residues long: Protein SprT (170 aa).

The SprT-like domain maps to 22–163 (LQQANLTLQT…RCRRCGKTLR (142 aa)). His78 is a binding site for Zn(2+). The active site involves Glu79. His82 lines the Zn(2+) pocket.

It belongs to the SprT family. Zn(2+) is required as a cofactor.

The protein localises to the cytoplasm. This Pectobacterium carotovorum subsp. carotovorum (strain PC1) protein is Protein SprT.